A 1266-amino-acid polypeptide reads, in one-letter code: Kinesin-like protein KIN-12G (1266 aa).

Residues 1-22 (MPSDCGDDDHGGGSAPAGFELQ) are disordered. Residues 32–369 (NVQVVIRVRP…LKFAQRAKYI (338 aa)) form the Kinesin motor domain. 113–120 (GQTGSGKT) provides a ligand contact to ATP. 4 coiled-coil regions span residues 613 to 668 (MEFI…SEAV), 817 to 854 (RSELTDLQLQLDEMHEENDKLMGLYEKAMQERDEFKRK), 1029 to 1060 (ARESETALRSKIDGLKVKLRSFEAQRKEAERV), and 1084 to 1120 (SELLRSEEERTKLLSELKKSREQLIMVQKEIKSMNRH).

It belongs to the TRAFAC class myosin-kinesin ATPase superfamily. Kinesin family. KIN-12 subfamily.

The protein is Kinesin-like protein KIN-12G of Oryza sativa subsp. japonica (Rice).